We begin with the raw amino-acid sequence, 549 residues long: Cytoplasmic trehalase (549 aa).

Substrate-binding positions include Arg-168, 175 to 176 (WD), Asn-212, 221 to 223 (RSQ), 292 to 294 (RDE), and Gly-324. Active-site proton donor/acceptor residues include Asp-326 and Glu-509. Glu-525 contributes to the substrate binding site.

It belongs to the glycosyl hydrolase 37 family. As to quaternary structure, monomer.

Its subcellular location is the cytoplasm. The catalysed reaction is alpha,alpha-trehalose + H2O = alpha-D-glucose + beta-D-glucose. The protein operates within glycan degradation; trehalose degradation; D-glucose from alpha,alpha-trehalose: step 1/1. Its function is as follows. Hydrolyzes trehalose to glucose. Could be involved, in cells returning to low osmolarity conditions, in the utilization of the accumulated cytoplasmic trehalose, which was synthesized in response to high osmolarity. This chain is Cytoplasmic trehalase, found in Escherichia coli O157:H7.